The primary structure comprises 435 residues: T-box transcription factor T (435 aa).

Positions 51-219 (LWLRFKELTN…YNPFAKAFLD (169 aa)) form a DNA-binding region, T-box. The segment at 279-308 (YPTLRSHRSSPYPSPYAHRNNSPTYSDNSP) is disordered. Residues 297–308 (RNNSPTYSDNSP) are compositionally biased toward polar residues.

As to quaternary structure, monomer. In terms of tissue distribution, detected in testis, but not in other, normal tissues. Detected in lung tumors (at protein level).

It localises to the nucleus. In terms of biological role, involved in the transcriptional regulation of genes required for mesoderm formation and differentiation. Binds to a palindromic T site 5'-TTCACACCTAGGTGTGAA-3' DNA sequence and activates gene transcription when bound to such a site. The polypeptide is T-box transcription factor T (Homo sapiens (Human)).